The chain runs to 473 residues: Lactate utilization protein B (473 aa).

2 consecutive 4Fe-4S ferredoxin-type domains span residues 303–333 and 352–381; these read GTAF…GHSY and YDDY…LHEL. The [4Fe-4S] cluster site is built by Cys312, Cys315, Cys318, Cys322, Cys365, Cys368, and Cys372.

The protein belongs to the LutB/YkgF family.

In terms of biological role, is involved in L-lactate degradation and allows cells to grow with lactate as the sole carbon source. Has probably a role as an electron transporter during oxidation of L-lactate. This is Lactate utilization protein B from Bacillus pumilus (strain SAFR-032).